Reading from the N-terminus, the 369-residue chain is Queuine tRNA-ribosyltransferase (369 aa).

The active-site Proton acceptor is the Asp90. Residues 90-94 (DSGGF), Asp144, Gln186, and Gly213 contribute to the substrate site. The segment at 244-250 (GVGKPAD) is RNA binding. Residue Asp263 is the Nucleophile of the active site. Zn(2+) contacts are provided by Cys301, Cys303, Cys306, and His332.

This sequence belongs to the queuine tRNA-ribosyltransferase family. Homodimer. Within each dimer, one monomer is responsible for RNA recognition and catalysis, while the other monomer binds to the replacement base PreQ1. Requires Zn(2+) as cofactor.

The catalysed reaction is 7-aminomethyl-7-carbaguanine + guanosine(34) in tRNA = 7-aminomethyl-7-carbaguanosine(34) in tRNA + guanine. It participates in tRNA modification; tRNA-queuosine biosynthesis. Functionally, catalyzes the base-exchange of a guanine (G) residue with the queuine precursor 7-aminomethyl-7-deazaguanine (PreQ1) at position 34 (anticodon wobble position) in tRNAs with GU(N) anticodons (tRNA-Asp, -Asn, -His and -Tyr). Catalysis occurs through a double-displacement mechanism. The nucleophile active site attacks the C1' of nucleotide 34 to detach the guanine base from the RNA, forming a covalent enzyme-RNA intermediate. The proton acceptor active site deprotonates the incoming PreQ1, allowing a nucleophilic attack on the C1' of the ribose to form the product. After dissociation, two additional enzymatic reactions on the tRNA convert PreQ1 to queuine (Q), resulting in the hypermodified nucleoside queuosine (7-(((4,5-cis-dihydroxy-2-cyclopenten-1-yl)amino)methyl)-7-deazaguanosine). The chain is Queuine tRNA-ribosyltransferase from Dichelobacter nodosus (strain VCS1703A).